The primary structure comprises 108 residues: UPF0102 protein Sfri_0388 (108 aa).

Belongs to the UPF0102 family.

This chain is UPF0102 protein Sfri_0388, found in Shewanella frigidimarina (strain NCIMB 400).